A 209-amino-acid chain; its full sequence is Mitotic spindle checkpoint protein MAD2 (209 aa).

Residues 15 to 198 enclose the HORMA domain; sequence HGSAAIVSEF…TKIHKVDTLV (184 aa).

The protein belongs to the MAD2 family. As to quaternary structure, part of the mitotic checkpoint complex (MCC); interacts with MAD1, CDC20-1, CDC20-2 and CDC20-5. Interacts with BUBR1 at chromocenters and with BUB3.1. Interacts with EIF4B3. As to expression, expressed in actively dividing tissues, early in organ development, in young leaves, lateral root primordia and root meristems.

The protein localises to the nucleus. Its subcellular location is the nucleus envelope. The protein resides in the chromosome. It is found in the centromere. It localises to the kinetochore. The protein localises to the cytoplasm. Its subcellular location is the cytoskeleton. The protein resides in the spindle. Its function is as follows. Required for the execution of the mitotic checkpoint which monitors the process of kinetochore-spindle attachment and delays the onset of anaphase when this process is not complete. It inhibits the activity of the anaphase promoting complex by sequestering CDC20 until all chromosomes are aligned at the metaphase plate. The sequence is that of Mitotic spindle checkpoint protein MAD2 from Arabidopsis thaliana (Mouse-ear cress).